Consider the following 82-residue polypeptide: Putative antitoxin VapB23 (82 aa).

In terms of biological role, putative antitoxin component of a possible type II toxin-antitoxin (TA) system. The cognate toxin is VapC23. This chain is Putative antitoxin VapB23 (vapB23), found in Mycobacterium tuberculosis (strain ATCC 25618 / H37Rv).